The sequence spans 228 residues: Ribosomal RNA small subunit methyltransferase G (228 aa).

S-adenosyl-L-methionine-binding positions include glycine 89, leucine 94, 140-141, and arginine 159; that span reads VE.

Belongs to the methyltransferase superfamily. RNA methyltransferase RsmG family.

The protein localises to the cytoplasm. It catalyses the reaction guanosine(527) in 16S rRNA + S-adenosyl-L-methionine = N(7)-methylguanosine(527) in 16S rRNA + S-adenosyl-L-homocysteine. Functionally, specifically methylates the N7 position of guanine in position 527 of 16S rRNA. The sequence is that of Ribosomal RNA small subunit methyltransferase G from Burkholderia vietnamiensis (strain G4 / LMG 22486) (Burkholderia cepacia (strain R1808)).